Reading from the N-terminus, the 205-residue chain is Probable thymidylate kinase (205 aa).

Gly-7–Ser-14 is a binding site for ATP.

This sequence belongs to the thymidylate kinase family.

The enzyme catalyses dTMP + ATP = dTDP + ADP. This is Probable thymidylate kinase from Methanoculleus marisnigri (strain ATCC 35101 / DSM 1498 / JR1).